Consider the following 466-residue polypeptide: MAKTLYEKLFDAHVVYEAENETPLLYIDRHLVHEVTSPQAFNGLRAHGRPVRQPGKTFATMDHNVSTQTKDINACGEMARIQMQELIKNCKEFGVELYDLNHPYQGIVHVMGPEQGVTLPGMTIVCGDSHTATHGAFGALAFGIGTSEVEHVLATQTLKQGRAKTMKIEVQGKAAPGITAKDIVLAIIGKTGSAGGTGHVVEFCGEAIRDLSMEGRMTLCNMAIEMGAKTGLVAPDETTFNYVKGRLHAPKGKDFDDAVAYWKTLQTDEGATFDTVVTLQAEEISPQVTWGTNPGQVISVNDNIPDPASFADPVKRASAEKALAYMGLKPGIPLTEVAIDKVFIGSCTNSRIEDLRAAAEIAKGRKVAPGVQALVVPGSGPVKAQAEAEGLDKIFIEAGFEWRLPGCSMCLAMNNDRLNPGERCASTSNRNFEGRQGRGGRTHLVSPAMAAAAAVTGHFADIRNIK.

[4Fe-4S] cluster-binding residues include Cys347, Cys407, and Cys410.

It belongs to the aconitase/IPM isomerase family. LeuC type 1 subfamily. As to quaternary structure, heterodimer of LeuC and LeuD. It depends on [4Fe-4S] cluster as a cofactor.

It carries out the reaction (2R,3S)-3-isopropylmalate = (2S)-2-isopropylmalate. The protein operates within amino-acid biosynthesis; L-leucine biosynthesis; L-leucine from 3-methyl-2-oxobutanoate: step 2/4. Its function is as follows. Catalyzes the isomerization between 2-isopropylmalate and 3-isopropylmalate, via the formation of 2-isopropylmaleate. The chain is 3-isopropylmalate dehydratase large subunit from Shigella sonnei (strain Ss046).